Reading from the N-terminus, the 227-residue chain is Ion-translocating oxidoreductase complex subunit E (227 aa).

Transmembrane regions (helical) follow at residues Leu-57 to Phe-77, Ile-89 to Ala-109, Pro-111 to Gly-131, Ala-146 to Ile-166, and Gly-200 to Val-220.

The protein belongs to the NqrDE/RnfAE family. As to quaternary structure, the complex is composed of six subunits: RnfA, RnfB, RnfC, RnfD, RnfE and RnfG.

The protein localises to the cell inner membrane. Functionally, part of a membrane-bound complex that couples electron transfer with translocation of ions across the membrane. The protein is Ion-translocating oxidoreductase complex subunit E of Haemophilus ducreyi (strain 35000HP / ATCC 700724).